A 118-amino-acid polypeptide reads, in one-letter code: Immunoglobulin heavy variable 3-9 (118 aa).

An N-terminal signal peptide occupies residues 1–19 (MELGLSWIFLLAILKGVQC). Residues 20–44 (EVQLVESGGGLVQPGRSLRLSCAAS) form a framework-1 region. Residues 20–118 (EVQLVESGGG…DTALYYCAKD (99 aa)) enclose the Ig-like domain. The cysteines at positions 41 and 115 are disulfide-linked. The interval 45–52 (GFTFDDYA) is complementarity-determining-1. Residues 53–69 (MHWVRQAPGKGLEWVSG) form a framework-2 region. The tract at residues 70–77 (ISWNSGSI) is complementarity-determining-2. The tract at residues 78-115 (GYADSVKGRFTISRDNAKNSLYLQMNSLRAEDTALYYC) is framework-3. The interval 116–118 (AKD) is complementarity-determining-3.

In terms of assembly, immunoglobulins are composed of two identical heavy chains and two identical light chains; disulfide-linked.

Its subcellular location is the secreted. It is found in the cell membrane. Its function is as follows. V region of the variable domain of immunoglobulin heavy chains that participates in the antigen recognition. Immunoglobulins, also known as antibodies, are membrane-bound or secreted glycoproteins produced by B lymphocytes. In the recognition phase of humoral immunity, the membrane-bound immunoglobulins serve as receptors which, upon binding of a specific antigen, trigger the clonal expansion and differentiation of B lymphocytes into immunoglobulins-secreting plasma cells. Secreted immunoglobulins mediate the effector phase of humoral immunity, which results in the elimination of bound antigens. The antigen binding site is formed by the variable domain of one heavy chain, together with that of its associated light chain. Thus, each immunoglobulin has two antigen binding sites with remarkable affinity for a particular antigen. The variable domains are assembled by a process called V-(D)-J rearrangement and can then be subjected to somatic hypermutations which, after exposure to antigen and selection, allow affinity maturation for a particular antigen. The protein is Immunoglobulin heavy variable 3-9 of Homo sapiens (Human).